Consider the following 423-residue polypeptide: Putative competence-damage inducible protein (423 aa).

Belongs to the CinA family.

This is Putative competence-damage inducible protein from Streptococcus pyogenes serotype M6 (strain ATCC BAA-946 / MGAS10394).